The sequence spans 338 residues: DNA-directed RNA polymerase I subunit RPA43 (338 aa).

The interval 209–338 (EVSEEVTENG…PKRKGKSNFL (130 aa)) is disordered. 3 positions are modified to phosphoserine: Ser242, Ser304, and Ser316. At Thr322 the chain carries Phosphothreonine. Position 328 is a phosphoserine (Ser328). The segment covering 328–338 (SPKRKGKSNFL) has biased composition (basic residues).

This sequence belongs to the eukaryotic RPA43 RNA polymerase subunit family. In terms of assembly, component of the RNA polymerase I (Pol I) complex consisting of 13 subunits: a ten-subunit catalytic core composed of POLR1A/RPA1, POLR1B/RPA2, POLR1C/RPAC1, POLR1D/RPAC2, POLR1H/RPA12, POLR2E/RPABC1, POLR2F/RPABC2, POLR2H/RPABC3, POLR2K/RPABC4 and POLR2L/RPABC5; a mobile stalk subunit POLR1F/RPA43 protruding from the core and additional subunits homologous to general transcription factors POLR1E/RPA49 and POLR1G/RPA34. Interacts with RRN3/TIF-IA. Widely expressed. Expressed in all fetal and adult tissues tested, with highest expression in fetal lung, liver, and kidney, and low expression in all adult tissues.

It localises to the nucleus. The protein localises to the nucleolus. In terms of biological role, component of RNA polymerase I (Pol I), a DNA-dependent RNA polymerase which synthesizes ribosomal RNA precursors using the four ribonucleoside triphosphates as substrates. Through its association with RRN3/TIF-IA may be involved in recruitment of Pol I to rDNA promoters. The sequence is that of DNA-directed RNA polymerase I subunit RPA43 from Homo sapiens (Human).